A 466-amino-acid polypeptide reads, in one-letter code: Asparagine--tRNA ligase (466 aa).

It belongs to the class-II aminoacyl-tRNA synthetase family. In terms of assembly, homodimer.

The protein resides in the cytoplasm. The enzyme catalyses tRNA(Asn) + L-asparagine + ATP = L-asparaginyl-tRNA(Asn) + AMP + diphosphate + H(+). The sequence is that of Asparagine--tRNA ligase from Salmonella paratyphi A (strain ATCC 9150 / SARB42).